A 405-amino-acid chain; its full sequence is Transposase from transposon Tn1545 (405 aa).

The Core-binding (CB) domain occupies 79–163 (GKKMTLCQLY…SLKASFYIAI (85 aa)). In terms of domain architecture, Tyr recombinase spans 186–392 (VPKTVLTEEQ…TFDSAMAEMK (207 aa)). Catalysis depends on residues Arg-225, Lys-264, His-343, Arg-346, and His-369. The O-(3'-phospho-DNA)-tyrosine intermediate role is filled by Tyr-379.

The protein belongs to the 'phage' integrase family.

This chain is Transposase from transposon Tn1545 (int), found in Streptococcus agalactiae serotype V (strain ATCC BAA-611 / 2603 V/R).